We begin with the raw amino-acid sequence, 170 residues long: Peptide deformylase (170 aa).

2 residues coordinate Fe cation: cysteine 91 and histidine 133. Glutamate 134 is a catalytic residue. Residue histidine 137 participates in Fe cation binding.

It belongs to the polypeptide deformylase family. Fe(2+) serves as cofactor.

It catalyses the reaction N-terminal N-formyl-L-methionyl-[peptide] + H2O = N-terminal L-methionyl-[peptide] + formate. Removes the formyl group from the N-terminal Met of newly synthesized proteins. Requires at least a dipeptide for an efficient rate of reaction. N-terminal L-methionine is a prerequisite for activity but the enzyme has broad specificity at other positions. The protein is Peptide deformylase of Histophilus somni (strain 129Pt) (Haemophilus somnus).